The following is a 151-amino-acid chain: Ubiquitin-conjugating enzyme E2 W (151 aa).

Met-1 is covalently cross-linked (Peptide (Met-Gly) (interchain with G-Cter in ubiquitin)). The 149-residue stretch at 3 to 151 (SMQKRLQKEL…TKWWYHDDTC (149 aa)) folds into the UBC core domain. Cys-91 serves as the catalytic Glycyl thioester intermediate.

Belongs to the ubiquitin-conjugating enzyme family. In terms of assembly, homodimer. Interacts with FANCL. Interacts with STUB1/CHIP. Post-translationally, autoubiquitinated at Met-1.

It localises to the nucleus. The enzyme catalyses S-ubiquitinyl-[E1 ubiquitin-activating enzyme]-L-cysteine + [E2 ubiquitin-conjugating enzyme]-L-cysteine = [E1 ubiquitin-activating enzyme]-L-cysteine + S-ubiquitinyl-[E2 ubiquitin-conjugating enzyme]-L-cysteine.. It catalyses the reaction S-ubiquitinyl-[E1 ubiquitin-activating enzyme]-L-cysteine + [acceptor protein]-N-terminal-amino acid = [E1 ubiquitin-activating enzyme]-L-cysteine + N-terminal-ubiquitinyl-[acceptor protein].. The protein operates within protein modification; protein ubiquitination. Functionally, accepts ubiquitin from the E1 complex and catalyzes its covalent attachment to other proteins. Specifically monoubiquitinates the N-terminus of various substrates, including ATXN3, MAPT/TAU, POLR2H/RPB8 and STUB1/CHIP, by recognizing backbone atoms of disordered N-termini. Involved in degradation of misfolded chaperone substrates by mediating monoubiquitination of STUB1/CHIP, leading to recruitment of ATXN3 to monoubiquitinated STUB1/CHIP, and restriction of the length of ubiquitin chain attached to STUB1/CHIP substrates by ATXN3. After UV irradiation, but not after mitomycin-C (MMC) treatment, acts as a specific E2 ubiquitin-conjugating enzyme for the Fanconi anemia complex by associating with E3 ubiquitin-protein ligase FANCL and catalyzing monoubiquitination of FANCD2, a key step in the DNA damage pathway. In vitro catalyzes 'Lys-11'-linked polyubiquitination. UBE2W-catalyzed ubiquitination also occurs in the presence of inactive RING/U-box type E3s, i.e. lacking the active site cysteine residues to form thioester bonds with ubiquitin, or even in the absence of E3, albeit at a slower rate. In Mus musculus (Mouse), this protein is Ubiquitin-conjugating enzyme E2 W (Ube2w).